A 477-amino-acid chain; its full sequence is Glutamyl-tRNA(Gln) amidotransferase subunit A (477 aa).

Residues K76 and S151 each act as charge relay system in the active site. The active-site Acyl-ester intermediate is the S175.

It belongs to the amidase family. GatA subfamily. As to quaternary structure, heterotrimer of A, B and C subunits.

It carries out the reaction L-glutamyl-tRNA(Gln) + L-glutamine + ATP + H2O = L-glutaminyl-tRNA(Gln) + L-glutamate + ADP + phosphate + H(+). Its function is as follows. Allows the formation of correctly charged Gln-tRNA(Gln) through the transamidation of misacylated Glu-tRNA(Gln) in organisms which lack glutaminyl-tRNA synthetase. The reaction takes place in the presence of glutamine and ATP through an activated gamma-phospho-Glu-tRNA(Gln). In Chlorobium phaeobacteroides (strain BS1), this protein is Glutamyl-tRNA(Gln) amidotransferase subunit A.